The following is a 161-amino-acid chain: Nucleotide-binding protein AZOSEA28950 (161 aa).

Belongs to the YajQ family.

Functionally, nucleotide-binding protein. The chain is Nucleotide-binding protein AZOSEA28950 from Aromatoleum aromaticum (strain DSM 19018 / LMG 30748 / EbN1) (Azoarcus sp. (strain EbN1)).